Here is a 177-residue protein sequence, read N- to C-terminus: Transmembrane protein 196 (177 aa).

The next 4 membrane-spanning stretches (helical) occupy residues 11–31 (LLVL…VGAV), 47–67 (SSPV…IFCA), 73–93 (LIMI…ILNI), and 106–126 (LYSL…GCTI). A compositionally biased stretch (basic and acidic residues) spans 152–162 (HSHEMTEKDTE). Residues 152–177 (HSHEMTEKDTENITNGGGPLALNGRV) are disordered.

It localises to the cytoplasm. The protein localises to the membrane. This chain is Transmembrane protein 196 (tmem196), found in Xenopus tropicalis (Western clawed frog).